Consider the following 415-residue polypeptide: 3-isopropylmalate dehydratase large subunit (415 aa).

Cys295, Cys353, and Cys356 together coordinate [4Fe-4S] cluster.

The protein belongs to the aconitase/IPM isomerase family. LeuC type 2 subfamily. Heterodimer of LeuC and LeuD. It depends on [4Fe-4S] cluster as a cofactor.

It carries out the reaction (2R,3S)-3-isopropylmalate = (2S)-2-isopropylmalate. Its pathway is amino-acid biosynthesis; L-leucine biosynthesis; L-leucine from 3-methyl-2-oxobutanoate: step 2/4. In terms of biological role, catalyzes the isomerization between 2-isopropylmalate and 3-isopropylmalate, via the formation of 2-isopropylmaleate. The polypeptide is 3-isopropylmalate dehydratase large subunit (Pyrobaculum arsenaticum (strain DSM 13514 / JCM 11321 / PZ6)).